The primary structure comprises 125 residues: Holo-[acyl-carrier-protein] synthase (125 aa).

Glutamate 9 and glutamine 58 together coordinate Mg(2+).

It belongs to the P-Pant transferase superfamily. AcpS family. The cofactor is Mg(2+).

The protein resides in the cytoplasm. It carries out the reaction apo-[ACP] + CoA = holo-[ACP] + adenosine 3',5'-bisphosphate + H(+). Transfers the 4'-phosphopantetheine moiety from coenzyme A to a Ser of acyl-carrier-protein. This chain is Holo-[acyl-carrier-protein] synthase, found in Rhodopirellula baltica (strain DSM 10527 / NCIMB 13988 / SH1).